Here is a 265-residue protein sequence, read N- to C-terminus: Probable FAD synthase (265 aa).

The protein belongs to the PAPS reductase family. FAD1 subfamily.

The enzyme catalyses FMN + ATP + H(+) = FAD + diphosphate. It functions in the pathway cofactor biosynthesis; FAD biosynthesis; FAD from FMN: step 1/1. Functionally, adenylates FMN to FAD. This Schizosaccharomyces pombe (strain 972 / ATCC 24843) (Fission yeast) protein is Probable FAD synthase.